The sequence spans 169 residues: Ribosome maturation factor RimM (169 aa).

The PRC barrel domain occupies 97–169 (EDEVYFKDLI…KIVVDWEYDY (73 aa)).

It belongs to the RimM family. As to quaternary structure, binds ribosomal protein uS19.

It localises to the cytoplasm. In terms of biological role, an accessory protein needed during the final step in the assembly of 30S ribosomal subunit, possibly for assembly of the head region. Essential for efficient processing of 16S rRNA. May be needed both before and after RbfA during the maturation of 16S rRNA. It has affinity for free ribosomal 30S subunits but not for 70S ribosomes. The protein is Ribosome maturation factor RimM of Francisella tularensis subsp. tularensis (strain FSC 198).